The chain runs to 273 residues: GTP cyclohydrolase MptA (273 aa).

Belongs to the GTP cyclohydrolase IV family. In terms of assembly, homodimer. Fe(2+) is required as a cofactor.

It catalyses the reaction GTP + H2O = 7,8-dihydroneopterin 2',3'-cyclic phosphate + formate + diphosphate + H(+). The protein operates within cofactor biosynthesis; 5,6,7,8-tetrahydromethanopterin biosynthesis. Its function is as follows. Converts GTP to 7,8-dihydro-D-neopterin 2',3'-cyclic phosphate, the first intermediate in the biosynthesis of coenzyme methanopterin. The polypeptide is GTP cyclohydrolase MptA (Picrophilus torridus (strain ATCC 700027 / DSM 9790 / JCM 10055 / NBRC 100828 / KAW 2/3)).